A 223-amino-acid polypeptide reads, in one-letter code: Small ribosomal subunit protein uS3 (223 aa).

A KH type-2 domain is found at 38 to 106; the sequence is IRKFLDEKLK…QVHINIVEIK (69 aa).

The protein belongs to the universal ribosomal protein uS3 family. Part of the 30S ribosomal subunit. Forms a tight complex with proteins S10 and S14.

Functionally, binds the lower part of the 30S subunit head. Binds mRNA in the 70S ribosome, positioning it for translation. This chain is Small ribosomal subunit protein uS3, found in Lactobacillus delbrueckii subsp. bulgaricus (strain ATCC 11842 / DSM 20081 / BCRC 10696 / JCM 1002 / NBRC 13953 / NCIMB 11778 / NCTC 12712 / WDCM 00102 / Lb 14).